Here is a 391-residue protein sequence, read N- to C-terminus: DNA repair protein NreB (391 aa).

The segment at 3-17 adopts a C4-type zinc-finger fold; it reads CIECRGRMLCSRKVC. Positions 384–391 match the PIP motif motif; the sequence is QRTLWEFM.

Belongs to the Nre family. Interacts with the DNA polymerase sliding clamp (PCNA) via the PIP (PCNA-interacting peptide) motif.

Functionally, involved in DNA damage repair. This chain is DNA repair protein NreB, found in Archaeoglobus fulgidus (strain ATCC 49558 / DSM 4304 / JCM 9628 / NBRC 100126 / VC-16).